The sequence spans 178 residues: MSRIGNKPVEIPSGVTVTVNGADVTVKGPKGELKRTFNPEIVVKVEDNTVVVERPSDKKEHRALHGTTRSLISNMVEGVSKGFEKSLELVGVGYRAQKSGQKLVLNVGYSHPVEIVPEKGIEIEVPSNTKVTVKGIDKERVGAVASNIRSVRLPEPYKGKGIRYEGEYVRRKEGKTGK.

It belongs to the universal ribosomal protein uL6 family. In terms of assembly, part of the 50S ribosomal subunit.

Functionally, this protein binds to the 23S rRNA, and is important in its secondary structure. It is located near the subunit interface in the base of the L7/L12 stalk, and near the tRNA binding site of the peptidyltransferase center. This chain is Large ribosomal subunit protein uL6, found in Halalkalibacterium halodurans (strain ATCC BAA-125 / DSM 18197 / FERM 7344 / JCM 9153 / C-125) (Bacillus halodurans).